A 2272-amino-acid chain; its full sequence is Voltage-dependent R-type calcium channel subunit alpha-1E (2272 aa).

A disordered region spans residues 1 to 40 (MARFGEAVVVGRPGSGDGDSDQSRNRQGTPVPASGPAAAY). Over 1 to 90 (MARFGEAVVV…KYAKKLIDWP (90 aa)) the chain is Cytoplasmic. S15 and S20 each carry phosphoserine. The I repeat unit spans residues 77 to 355 (NIVRKYAKKL…LVLGVLSGEF (279 aa)). A helical transmembrane segment spans residues 91-109 (PFEYMILATIIANCIVLAL). Over 110–128 (EQHLPEDDKTPMSRRLEKT) the chain is Extracellular. The chain crosses the membrane as a helical span at residues 129-147 (EPYFIGIFCFEAGIKIVAL). The Cytoplasmic segment spans residues 148–159 (GFIFHKGSYLRN). A helical transmembrane segment spans residues 160–174 (GWNVMDFIVVLSGIL). Over 175–186 (ATAGTHFNTHVD) the chain is Extracellular. Residues 187 to 206 (LRALRAVRVLRPLKLVSGIP) form a helical membrane-spanning segment. The Cytoplasmic segment spans residues 207–224 (SLQIVLKSIMKAMVPLLQ). The chain crosses the membrane as a helical span at residues 225–245 (IGLLLFFAILMFAIIGLEFYS). Topologically, residues 246 to 327 (GKLHRACFMN…NTNDALGATW (82 aa)) are extracellular. N-linked (GlcNAc...) asparagine glycosylation is present at N255. Residues 328-351 (NWLYFIPLIIIGSFFVLNLVLGVL) form a helical membrane-spanning segment. The Cytoplasmic portion of the chain corresponds to 352–477 (SGEFAKERER…ISIRHMVKSQ (126 aa)). The interval 375 to 392 (QQIERELNGYRAWIDKAE) is binding to the beta subunit. Position 427 (D427) interacts with Ca(2+). The residue at position 428 (S428) is a Phosphoserine. Ca(2+) contacts are provided by S429, E431, C433, and S438. T441 is subject to Phosphothreonine. One copy of the II repeat lies at 463 to 707 (ERLLRISIRH…VFLAIAVDNL (245 aa)). A helical transmembrane segment spans residues 478–497 (VFYWIVLSVVALNTACVAIV). Topologically, residues 498 to 510 (HHNQPQWLTHLLY) are extracellular. Residues 511 to 530 (YAEFLFLGLFLLEMSLKMYG) form a helical membrane-spanning segment. The Cytoplasmic portion of the chain corresponds to 531–539 (MGPRLYFHS). A helical transmembrane segment spans residues 540–558 (SFNCFDFGVTVGSIFEVVW). Residues 559 to 568 (AIFRPGTSFG) lie on the Extracellular side of the membrane. A helical membrane pass occupies residues 569–587 (ISVLRALRLLRIFKITKYW). Topologically, residues 588-606 (ASLRNLVVSLMSSMKSIIS) are cytoplasmic. Residues 607–626 (LLFLLFLFIVVFALLGMQLF) traverse the membrane as a helical segment. The Extracellular portion of the chain corresponds to 627–679 (GGRFNFNDGTPSANFDTFPAAIMTVFQILTGEDWNEVMYNGIRSQGGVSSGMW). A helical transmembrane segment spans residues 680 to 704 (SAIYFIVLTLFGNYTLLNVFLAIAV). Topologically, residues 705 to 1150 (DNLANAQELT…TTNPIRRACH (446 aa)) are cytoplasmic. The interval 730 to 777 (LQKAKEVSPMSAPNMPSIERDRRRRHHMSMWEPRSSHLRERRRRHHMS) is disordered. S737, S746, S794, S816, and S856 each carry phosphoserine. Disordered stretches follow at residues 854 to 994 (GGSL…VPRG) and 1091 to 1127 (SNKTDGEASPLKEAETKEEEEEVEKKKKQKKEKRETG). Over residues 914-927 (RHRQSQRRSRHRRV) the composition is skewed to basic residues. Residues 934 to 946 (SASASRSRSASQE) are compositionally biased toward low complexity. S948 carries the phosphoserine modification. Basic and acidic residues-rich tracts occupy residues 956–985 (EGEKEHEPHSSHRSKEPTIHEEERTQDLRR) and 1094–1105 (TDGEASPLKEAE). S1099 carries the post-translational modification Phosphoserine. An III repeat occupies 1143 to 1429 (NPIRRACHYI…IFVALIIITF (287 aa)). A helical membrane pass occupies residues 1151 to 1167 (YIVNLRYFEMCILLVIA). Over 1168 to 1191 (ASSIALAAEDPVLTNSERNKVLRY) the chain is Extracellular. The helical transmembrane segment at 1192-1211 (FDYVFTGVFTFEMVIKMIDQ) threads the bilayer. Topologically, residues 1212-1219 (GLILQDGS) are cytoplasmic. A helical membrane pass occupies residues 1220 to 1242 (YFRDLWNILDFVVVVGALVAFAL). Topologically, residues 1243–1256 (ANALGTNKGRDIKT) are extracellular. A helical membrane pass occupies residues 1257 to 1274 (IKSLRVLRVLRPLKTIKR). The Cytoplasmic segment spans residues 1275–1293 (LPKLKAVFDCVVTSLKNVF). The helical transmembrane segment at 1294–1313 (NILIVYKLFMFIFAVIAVQL) threads the bilayer. Topologically, residues 1314 to 1400 (FKGKFFYCTD…DRGPSRSNRM (87 aa)) are extracellular. The helical transmembrane segment at 1401-1424 (EMSIFYVVYFVVFPFFFVNIFVAL) threads the bilayer. Residues 1425–1481 (IIITFQEQGDKMMEECSLEKNERACIDFAISAKPLTRYMPQNRHTFQYRVWHFVVSP) lie on the Cytoplasmic side of the membrane. The IV repeat unit spans residues 1466-1729 (NRHTFQYRVW…LFVAVIMDNF (264 aa)). Residues 1482–1500 (SFEYTIMAMIALNTVVLMM) form a helical membrane-spanning segment. Over 1501–1515 (KYYTAPCTYELALKY) the chain is Extracellular. Residues 1516-1535 (LNIAFTMVFSLECVLKVIAF) traverse the membrane as a helical segment. Over 1536–1543 (GFLNYFRD) the chain is Cytoplasmic. Residues 1544–1562 (TWNIFDFITVIGSITEIIL) traverse the membrane as a helical segment. The Extracellular segment spans residues 1563–1573 (TDSKLVNTSGF). N-linked (GlcNAc...) asparagine glycosylation occurs at N1569. Residues 1574–1592 (NMSFLKLFRAARLIKLLRQ) form a helical membrane-spanning segment. The Cytoplasmic segment spans residues 1593–1611 (GYTIRILLWTFVQSFKALP). A helical transmembrane segment spans residues 1612–1631 (YVCLLIAMLFFIYAIIGMQV). The Extracellular segment spans residues 1632–1700 (FGNIKLDEES…QNESERCGTD (69 aa)). N1692 carries an N-linked (GlcNAc...) asparagine glycan. The helical transmembrane segment at 1701 to 1726 (LAYVYFVSFIFFCSFLMLNLFVAVIM) threads the bilayer. At 1727–2272 (DNFEYLTRDS…LSDTEEDDKC (546 aa)) the chain is on the cytoplasmic side. An EF-hand domain is found at 1742 to 1777 (HHLDEFVRVWAEYDRAACGRIHYTEMYEMLTLMSPP). Ca(2+) contacts are provided by D1755, R1761, and E1766. A disordered region spans residues 2021–2186 (SAHRLNSDSG…QQGQHPSPQH (166 aa)). The segment covering 2025 to 2045 (LNSDSGHKSDTHRSGGRERGR) has biased composition (basic and acidic residues). A phosphoserine mark is found at S2054 and S2073. The segment covering 2061-2078 (NSEERGTQADWESPERRQ) has biased composition (basic and acidic residues). Residues 2097-2112 (SLSESSIPSISDTSTP) are compositionally biased toward low complexity. Positions 2155-2174 (LASQALESNSACLTESSNSL) are enriched in polar residues. Residues 2175–2186 (HPQQGQHPSPQH) show a composition bias toward low complexity.

Belongs to the calcium channel alpha-1 subunit (TC 1.A.1.11) family. CACNA1E subfamily. As to quaternary structure, interacts with EFHC1. Voltage-dependent calcium channels are multisubunit complexes, consisting of alpha-1, alpha-2, beta and delta subunits in a 1:1:1:1 ratio. The channel activity is directed by the pore-forming and voltage-sensitive alpha-1 subunit. In many cases, this subunit is sufficient to generate voltage-sensitive calcium channel activity. The auxiliary subunits beta and alpha-2/delta linked by a disulfide bridge regulate the channel activity. Expressed in neuronal tissues, retina, spleen, and pancreatic islet cells.

It is found in the membrane. It carries out the reaction Ca(2+)(in) = Ca(2+)(out). Its function is as follows. Voltage-sensitive calcium channels (VSCC) mediate the entry of calcium ions into excitable cells and are also involved in a variety of calcium-dependent processes, including muscle contraction, hormone or neurotransmitter release, gene expression, cell motility, cell division and cell death. The isoform alpha-1E gives rise to R-type calcium currents. R-type calcium channels belong to the 'high-voltage activated' (HVA) group and are blocked by nickel. They are however insensitive to dihydropyridines (DHP). Calcium channels containing alpha-1E subunit could be involved in the modulation of firing patterns of neurons which is important for information processing. The protein is Voltage-dependent R-type calcium channel subunit alpha-1E (Cacna1e) of Mus musculus (Mouse).